We begin with the raw amino-acid sequence, 366 residues long: Chorismate synthase (366 aa).

NADP(+) contacts are provided by arginine 48 and arginine 54. FMN contacts are provided by residues 125-127 (RSS), 238-239 (NA), glycine 278, 293-297 (KPTSS), and arginine 319.

The protein belongs to the chorismate synthase family. Homotetramer. FMNH2 serves as cofactor.

The enzyme catalyses 5-O-(1-carboxyvinyl)-3-phosphoshikimate = chorismate + phosphate. It participates in metabolic intermediate biosynthesis; chorismate biosynthesis; chorismate from D-erythrose 4-phosphate and phosphoenolpyruvate: step 7/7. Its function is as follows. Catalyzes the anti-1,4-elimination of the C-3 phosphate and the C-6 proR hydrogen from 5-enolpyruvylshikimate-3-phosphate (EPSP) to yield chorismate, which is the branch point compound that serves as the starting substrate for the three terminal pathways of aromatic amino acid biosynthesis. This reaction introduces a second double bond into the aromatic ring system. The chain is Chorismate synthase from Herminiimonas arsenicoxydans.